Here is a 741-residue protein sequence, read N- to C-terminus: Endoplasmic reticulum membrane sensor NFE2L1 (741 aa).

Residues 7–24 form a helical; Signal-anchor for type II membrane protein membrane-spanning segment; it reads YLTEGLLQFTILLSLIGV. Disordered stretches follow at residues 108 to 148 and 198 to 220; these read DPEG…TEQG and QKEQ…WSGE. Polar residues predominate over residues 113–131; the sequence is VSGSQPNSGLALESSSGLQ. The cholesterol recognition/amino acid consensus (CRAC) region stretch occupies residues 191-199; that stretch reads VFDYSHRQK. A compositionally biased stretch (basic and acidic residues) spans 198–216; sequence QKEQDVDKELQDGREREDT. N-linked (GlcNAc...) asparagine glycosylation is found at Asn319 and Asn331. Residues 350-354 are CPD; the sequence is SPEVE. Asn394 carries N-linked (GlcNAc...) asparagine glycosylation. Disordered regions lie at residues 441-501 and 551-582; these read EEEF…DSET and SALD…QMSR. The Destruction motif signature appears at 447-451; the sequence is DSGLS. Over residues 447 to 492 the composition is skewed to low complexity; it reads DSGLSLDSSHSPSSLSSSEGSSSSSSSSSSSSASSSASSSFSEEGA. Ser497 carries the phosphoserine; by CK2 modification. The span at 567–582 shows a compositional bias: basic and acidic residues; sequence GSKEKQADFLDKQMSR. Ser568 bears the Phosphoserine mark. One can recognise a bZIP domain in the interval 623 to 686; it reads LIRDIRRRGK…RQMKQKVQSL (64 aa). Residues 625–644 are basic motif; it reads RDIRRRGKNKMAAQNCRKRK. A leucine-zipper region spans residues 651 to 665; sequence LERDVEDLQRDKARL. A disordered region spans residues 722–741; sequence RTMADQQARRQERKPKDRRK. A Nuclear localization signal motif is present at residues 730 to 737; sequence RRQERKPK. Positions 732–741 are enriched in basic residues; that stretch reads QERKPKDRRK.

This sequence belongs to the bZIP family. CNC subfamily. Interacts with KEAP1. As to quaternary structure, interacts (via CPD region) with FBXW7; leading to its ubiquitination and degradation. Interacts with SYVN1/HRD1; leading to its ubiquitination and degradation. Interacts (when ubiquitinated) with DDI2; leading to its cleavage. In terms of assembly, interacts (via the bZIP domain) with small MAF protein (MAFF, MAFG or MAFK); required for binding to antioxidant response elements (AREs) on DNA. Interacts (via Destruction motif) with BTRC; leading to its ubiquitination and degradation. Interacts with CEBPB; the heterodimer represses expression of DSPP during odontoblast differentiation. Interacts with MOTS-c, a peptide produced by the mitochondrially encoded 12S rRNA MT-RNR1. In terms of processing, cleaved at Leu-104 by the aspartyl protease DDI2 following retrotranslocation, releasing the protein from the endoplasmic reticulum membrane and forming the transcription factor NRF1 that translocates into the nucleus. Ubiquitination is prerequisite for cleavage by aspartyl protease DDI2. N-glycosylated in normal conditions, when it has a single-pass type II membrane protein topology, with the DNA-binding domain facing the endoplasmic reticulum lumen. Deglycosylated during retrotranslocation to the cytosolic side of the membrane, to have a single-pass type III membrane protein topology with the major part of the protein facing the cytosol. Post-translationally, ubiquitinated by the SCF(FBXW7) complex and SYVN1/HRD1, leading to its degradation by the proteasome. Ubiquitinated during retrotranslocation to the cytosolic side of the membrane: ubiquitination does not lead to degradation and is required for processing by the aspartyl protease DDI2 and subsequent release from the endoplasmic reticulum membrane. In terms of processing, phosphorylation by CK2 at Ser-497 inhibits transcription factor activity, possibly by affecting DNA-binding activity. Phosphorylation at Ser-568 is required for interaction with CEBPB. Ubiquitinated by the SCF(BTRC) complex in the nucleus, leading to its degradation by the proteasome. Isoform 1: Widely expressed including kidney, brown fat, white fat, large intestine, small intestine, stomach, lung, brain and liver. Isoform 1: Expressed in mouse embryonic fibroblasts (MEF). Isoform 2: Widely expressed including kidney, brown fat, white fat, large intestine, small intestine, stomach, lung, brain and liver. Isoform 2: levels in white fat, lung and liver are increased compared to isoform 1 (at protein level). Isoform 2: levels are elevated in brown fat and brain, but are reduced in liver compared to isoform 1 levels. Isoform 2: Expressed in mouse embryonic fibroblasts (MEF).

It is found in the endoplasmic reticulum membrane. The protein localises to the nucleus. It localises to the cytoplasm. Endoplasmic reticulum membrane sensor that translocates into the nucleus in response to various stresses to act as a transcription factor. Constitutes a precursor of the transcription factor NRF1. Able to detect various cellular stresses, such as cholesterol excess, oxidative stress or proteasome inhibition. In response to stress, it is released from the endoplasmic reticulum membrane following cleavage by the protease DDI2 and translocates into the nucleus to form the transcription factor NRF1. Acts as a key sensor of cholesterol excess: in excess cholesterol conditions, the endoplasmic reticulum membrane form of the protein directly binds cholesterol via its CRAC motif, preventing cleavage and release of the transcription factor NRF1, thereby allowing expression of genes promoting cholesterol removal, such as CD36. Involved in proteasome homeostasis: in response to proteasome inhibition, it is released from the endoplasmic reticulum membrane, translocates to the nucleus and activates expression of genes encoding proteasome subunits. In terms of biological role, CNC-type bZIP family transcription factor that translocates to the nucleus and regulates expression of target genes in response to various stresses. Heterodimerizes with small-Maf proteins (MAFF, MAFG or MAFK) and binds DNA motifs including the antioxidant response elements (AREs), which regulate expression of genes involved in oxidative stress response. Activates or represses expression of target genes, depending on the context. Plays a key role in cholesterol homeostasis by acting as a sensor of cholesterol excess: in low cholesterol conditions, translocates into the nucleus and represses expression of genes involved in defense against cholesterol excess, such as CD36. In excess cholesterol conditions, the endoplasmic reticulum membrane form of the protein directly binds cholesterol via its CRAC motif, preventing cleavage and release of the transcription factor NRF1, thereby allowing expression of genes promoting cholesterol removal. Critical for redox balance in response to oxidative stress: acts by binding the AREs motifs on promoters and mediating activation of oxidative stress response genes, such as GCLC, GCLM, GSS, MT1 and MT2. Plays an essential role during fetal liver hematopoiesis: probably has a protective function against oxidative stress and is involved in lipid homeostasis in the liver. Involved in proteasome homeostasis: in response to proteasome inhibition, mediates the 'bounce-back' of proteasome subunits by translocating into the nucleus and activating expression of genes encoding proteasome subunits. Also involved in regulating glucose flux. Together with CEBPB; represses expression of DSPP during odontoblast differentiation. In response to ascorbic acid induction, activates expression of SP7/Osterix in osteoblasts. Functionally, transcription factor that binds the antioxidant response elements (ARE) consensus sequence on promoters and activates their expression. Its function is as follows. Transcription factor that binds the extended kappa 3 site of the TNF-alpha promoter after Fc gamma RIII stimulation and participates in the induction of this cytokine. This Mus musculus (Mouse) protein is Endoplasmic reticulum membrane sensor NFE2L1.